Consider the following 504-residue polypeptide: ATP synthase subunit alpha, chloroplastic (504 aa).

Position 170–177 (170–177) interacts with ATP; that stretch reads GDRQTGKT.

The protein belongs to the ATPase alpha/beta chains family. F-type ATPases have 2 components, CF(1) - the catalytic core - and CF(0) - the membrane proton channel. CF(1) has five subunits: alpha(3), beta(3), gamma(1), delta(1), epsilon(1). CF(0) has four main subunits: a, b, b' and c.

It localises to the plastid. It is found in the chloroplast thylakoid membrane. The catalysed reaction is ATP + H2O + 4 H(+)(in) = ADP + phosphate + 5 H(+)(out). Functionally, produces ATP from ADP in the presence of a proton gradient across the membrane. The alpha chain is a regulatory subunit. The sequence is that of ATP synthase subunit alpha, chloroplastic from Pyropia yezoensis (Susabi-nori).